A 146-amino-acid chain; its full sequence is Mitochondrial import receptor subunit TOM20 homolog B (146 aa).

The Mitochondrial intermembrane segment spans residues 1 to 5 (MMGGS). A helical transmembrane segment spans residues 6-25 (SSRIAAGLGAALFVGYCIYF). The Cytoplasmic portion of the chain corresponds to 26–146 (DRKRRSDPNY…AQSISDDDIE (121 aa)). Positions 37-47 (NKLRERRKKQK) are enriched in basic residues. The interval 37–56 (NKLRERRKKQKAAQEKAGLS) is disordered. A Phosphoserine modification is found at S141.

The protein belongs to the Tom20 family. As to quaternary structure, forms part of the preprotein translocase complex of the outer mitochondrial membrane (TOM complex). Interacts with tom22.

The protein localises to the mitochondrion outer membrane. In terms of biological role, central component of the receptor complex responsible for the recognition and translocation of cytosolically synthesized mitochondrial preproteins. Together with tom22 functions as the transit peptide receptor at the surface of the mitochondrion outer membrane and facilitates the movement of preproteins into the tom40 translocation pore. In Danio rerio (Zebrafish), this protein is Mitochondrial import receptor subunit TOM20 homolog B (tomm20b).